Reading from the N-terminus, the 435-residue chain is Protein deadpan (435 aa).

Positions 18–27 are enriched in low complexity; sequence GYSDSYGSNG. Residues 18–48 form a disordered region; that stretch reads GYSDSYGSNGRMSNPNGLSKAELRKTNKPIM. The 58-residue stretch at 40 to 97 folds into the bHLH domain; it reads LRKTNKPIMEKRRRARINHCLNELKSLILEAMKKDPARHTKLEKADILEMTVKHLQSV. Residues 116 to 149 enclose the Orange domain; the sequence is FKTGFVECAEEVNRYVSQMDGIDTGVRQRLSAHL. Disordered stretches follow at residues 305 to 334 and 349 to 416; these read QLPV…AASP and STPP…DEPS. Low complexity predominate over residues 311–324; that stretch reads STSPPLSPISSISS. Polar residues-rich tracts occupy residues 355 to 378 and 385 to 395; these read SAET…SSGC and LQQQQVSSTSG. Residues Ser407, Ser408, and Ser411 each carry the phosphoserine modification. Residues 432–435 carry the WRPW motif motif; sequence WRPW.

In terms of assembly, homodimer. Heterodimer with E(spl)mgamma-HLH and E(spl). Transcription repression requires formation of a complex with the corepressor protein Groucho. Interacts (via bHLH motif) with sisA. Interacts with da.

The protein resides in the nucleus. Its function is as follows. Transcriptional repressor of genes that require a bHLH protein for their transcription. In the larval brain, required to maintain the self-renewal and identity of type II neuroblasts by regulating the expression of the transcriptional repressor erm together with other self-renewal transcriptional repressors such as klu and E(spl)mgamma-HLH. As part of its role in neuroblasts development, has been shown to be a direct target of the Notch signaling pathway, however might work also independently of N/Notch. In the developing larval and pupal brain, required for mushroom body differentiation. Involved in sex determination and SXL transcription repression when in complex with the corepressor protein Groucho. The protein is Protein deadpan (dpn) of Drosophila melanogaster (Fruit fly).